Here is a 267-residue protein sequence, read N- to C-terminus: Hydroxyacylglutathione hydrolase (267 aa).

Zn(2+) contacts are provided by His-55, His-57, Asp-59, His-60, His-121, Asp-138, and His-176.

Belongs to the metallo-beta-lactamase superfamily. Glyoxalase II family. Monomer. Zn(2+) serves as cofactor.

The enzyme catalyses an S-(2-hydroxyacyl)glutathione + H2O = a 2-hydroxy carboxylate + glutathione + H(+). It functions in the pathway secondary metabolite metabolism; methylglyoxal degradation; (R)-lactate from methylglyoxal: step 2/2. Functionally, thiolesterase that catalyzes the hydrolysis of S-D-lactoyl-glutathione to form glutathione and D-lactic acid. This is Hydroxyacylglutathione hydrolase from Shewanella sp. (strain ANA-3).